Here is a 166-residue protein sequence, read N- to C-terminus: MKNPEEAADGKQRIHLRPGSLRGAAPAKLHLLPCDVLVSRPAPVDRFFTPAVRHDADGLQASFRGRGLRGEEVAVPPGFAGFVMVTEEKGEGLIGKLNFSGDAEDKADEAQEPLERDFDRLIGATGSFSHFTLWGLETVPGPDAKVHRALGWPSLAAAIHAQVPED.

Met1 carries the post-translational modification N-acetylmethionine.

Belongs to the RNase H2 subunit C family. As to quaternary structure, the RNase H2 complex is a heterotrimer composed of the catalytic subunit RNASEH2A and the non-catalytic subunits RNASEH2B and RNASEH2C.

It is found in the nucleus. Functionally, non catalytic subunit of RNase H2, an endonuclease that specifically degrades the RNA of RNA:DNA hybrids. Participates in DNA replication, possibly by mediating the removal of lagging-strand Okazaki fragment RNA primers during DNA replication. Mediates the excision of single ribonucleotides from DNA:RNA duplexes. This Mus musculus (Mouse) protein is Ribonuclease H2 subunit C (Rnaseh2c).